The primary structure comprises 78 residues: Consomatin Te1 (78 aa).

The first 22 residues, methionine 1–glycine 22, serve as a signal peptide directing secretion. The propeptide occupies glycine 23–arginine 56. The cysteines at positions 63 and 68 are disulfide-linked. Tryptophan 65 carries the D-tryptophan modification. 4-hydroxyproline occurs at positions 69, 70, and 72. Residues arginine 74 to serine 78 constitute a propeptide that is removed on maturation.

The protein belongs to the conotoxin C superfamily. Consomatin family. As to expression, expressed by the venom duct.

Its subcellular location is the secreted. Functionally, moderately activates human somatostatin receptors (SSTR) with a preferential activation of SSTR1 and SSTR4. In vivo, does not cause behavioral changes in mice within a few minutes of intracranial injection, but causes a progressive loss of movement thereafter. Four to five hours after injection, mice recover, even with the highest dose tested. Shows antinociception and antihyperalgesia activities in two mouse models of acute pain, most probably by acting outside the central nervous system. This Conus terebra (Sea snail) protein is Consomatin Te1.